The chain runs to 338 residues: Glycerol-3-phosphate dehydrogenase [NAD(P)+] (338 aa).

Residues Ser-12, Trp-13, Arg-33, and Lys-110 each coordinate NADPH. Residues Lys-110, Gly-141, and Ser-143 each coordinate sn-glycerol 3-phosphate. NADPH is bound at residue Ala-145. Residues Lys-196, Asp-249, Ser-259, Arg-260, and Asn-261 each contribute to the sn-glycerol 3-phosphate site. The active-site Proton acceptor is the Lys-196. Arg-260 lines the NADPH pocket. Positions 284 and 286 each coordinate NADPH.

It belongs to the NAD-dependent glycerol-3-phosphate dehydrogenase family.

It is found in the cytoplasm. The enzyme catalyses sn-glycerol 3-phosphate + NAD(+) = dihydroxyacetone phosphate + NADH + H(+). The catalysed reaction is sn-glycerol 3-phosphate + NADP(+) = dihydroxyacetone phosphate + NADPH + H(+). It participates in membrane lipid metabolism; glycerophospholipid metabolism. Its function is as follows. Catalyzes the reduction of the glycolytic intermediate dihydroxyacetone phosphate (DHAP) to sn-glycerol 3-phosphate (G3P), the key precursor for phospholipid synthesis. The sequence is that of Glycerol-3-phosphate dehydrogenase [NAD(P)+] from Limosilactobacillus reuteri (strain DSM 20016) (Lactobacillus reuteri).